The following is a 447-amino-acid chain: Phosphoglucosamine mutase (447 aa).

Catalysis depends on serine 102, which acts as the Phosphoserine intermediate. Serine 102, aspartate 241, aspartate 243, and aspartate 245 together coordinate Mg(2+). Position 102 is a phosphoserine (serine 102).

It belongs to the phosphohexose mutase family. Requires Mg(2+) as cofactor. In terms of processing, activated by phosphorylation.

It catalyses the reaction alpha-D-glucosamine 1-phosphate = D-glucosamine 6-phosphate. Catalyzes the conversion of glucosamine-6-phosphate to glucosamine-1-phosphate. The chain is Phosphoglucosamine mutase from Pseudomonas savastanoi pv. phaseolicola (strain 1448A / Race 6) (Pseudomonas syringae pv. phaseolicola (strain 1448A / Race 6)).